Reading from the N-terminus, the 472-residue chain is Clampless protein 1 (472 aa).

2 N-linked (GlcNAc...) asparagine glycosylation sites follow: asparagine 70 and asparagine 296.

Functionally, required for developmental progression after cells of opposite mating types fuse with one another, essential for processes common to both dikaryotic filament formation and monokaryotic fruiting. A direct target for transcription factors Sxi1-alpha and Sxi2-a. The chain is Clampless protein 1 from Cryptococcus neoformans var. neoformans serotype D (strain B-3501A) (Filobasidiella neoformans).